Reading from the N-terminus, the 910-residue chain is MGDNPWVLQEQVLVELSEVIKNSLSENSQTRNAALNLLEKAKDIPDLNNYLTCILINATELSVSIRSAAGLLLKNNVRVSSLESGSGLQSLDYTKSTVIRGLCDPEQLIRGISGNVITTIISRWGISTWPEVLPQLMEMLSSPASTTQEGAFSALTKICEDSAQELDRDFNGTRPLDFMIPRFIELARHENPKIRTDALFCLNQFVLIQSQSLYAHIDTFLETCYALATDVSPNVRKNVCQALVYLLDVRPDKIAPSLGSIVEYMLYSTQDSDQNVALEACEFWLAIAEQPDLCSALGPYLDKIVPMLLQGMVYSDMDLLLLGNDADDYDVEDREEDIRPQHAKGKSRITLNTQGPITQQGSSNADADELEDEDEDDDEFDEDDDAFMDWNLRKCSAAALDVLSSFWKQRLLEIILPHLKQSLTSEDWKVQEAGVLAVGAIAEGCMDGMVQYLPELYPYFLSLLDSKKPLVRTITCWTLGRYSKWASCLESEEDRQKYFVPLLQGLLRMVVDNNKKVQEAGCSAFAILEEQAGPSLVPYLEPILTNLAFAFQKYQRKNVLILYDAVQTLADYVGSALNDKRYIELLITPLLQKWSMIPDDDPNLFPLFECLSSVAVALRDGFAPFAAETYARTFRILRNTLYLITTAQNDPTVDVPDRDFLVTTLDLVSGIIQALGSQVSPLLAQADPPLGQIIGICAKDEVPEVRQSAYALLGDMCMYCFDQIRPYCDALLVDMLPQMQLPLLHVSASNNAIWSAGEMALQLGKDMQQWVKPLLERLICILKSKKSNTTVLENVAITIGRLGVYNPELVAPHLELFYQPWFEIIKTVGENEEKDSAFRGFCNILACNPQALSYLLPMFVLCVAEYENPSAELRDMFQKILQGSVELFNGKASWQASPEVLAQIQAQYGV.

19 HEAT repeats span residues 12–39 (VLVE…NLLE), 44–82 (IPDL…VSSL), 93–126 (YTKS…RWGI), 132–169 (VLPQ…LDRD), 177–207 (DFMI…QFVL), 220–247 (FLET…VYLL), 259–286 (GSIV…FWLA), 302–406 (DKIV…LSSF), 414–442 (IILP…GAIA), 454–481 (PELY…TLGR), 499–532 (FVPL…EEQA), 540–573 (LEPI…ADYV), 581–619 (RYIE…VALR), 627–677 (AETY…ALGS), 690–721 (LGQI…MYCF), 729–764 (DALL…LQLG), 772–807 (KPLL…VYNP), 815–848 (ELFY…LACN), and 857–888 (PMFV…VELF). Residues 34-122 (ALNLLEKAKD…SGNVITTIIS (89 aa)) enclose the Importin N-terminal domain. The interval 333 to 381 (DREEDIRPQHAKGKSRITLNTQGPITQQGSSNADADELEDEDEDDDEFD) is disordered. Positions 349–364 (ITLNTQGPITQQGSSN) are enriched in polar residues. Residues 366–381 (DADELEDEDEDDDEFD) are compositionally biased toward acidic residues.

The protein belongs to the importin beta family. Importin beta-2 subfamily. Interacts with Ran; interacts specifically with the GTP-bound form of Ran (GTP-Ran), protecting it from GTP hydrolysis and nucleotide exchange. Interacts with nucleoporins.

Its subcellular location is the cytoplasm. It localises to the nucleus envelope. In terms of biological role, functions in nuclear protein import as nuclear transport receptor. Serves as receptor for arginine/glycine-rich nuclear localization signals (rg-NLS) and PY-NLS in cargo substrates. Its predominant cargo substrate seems to be mRNA-binding proteins. Mediates docking of the importin/substrate complex to the nuclear pore complex (NPC) through binding to repeat-containing nucleoporins. The complex is subsequently translocated through the pore by an energy requiring, Ran-dependent mechanism. At the nucleoplasmic side of the NPC, GTP-Ran binding leads to release of the cargo. The importin is re-exported from the nucleus to the cytoplasm where GTP hydrolysis releases Ran from importin. The directionality of nuclear import is thought to be conferred by an asymmetric distribution of the GTP- and GDP-bound forms of Ran between the cytoplasm and nucleus. The sequence is that of Importin subunit beta-2 from Schizosaccharomyces pombe (strain 972 / ATCC 24843) (Fission yeast).